The sequence spans 302 residues: 4-diphosphocytidyl-2-C-methyl-D-erythritol kinase (302 aa).

Residue Lys27 is part of the active site. 110 to 120 is a binding site for ATP; sequence PMGGGVGGGSS. Asp152 is an active-site residue.

Belongs to the GHMP kinase family. IspE subfamily.

It catalyses the reaction 4-CDP-2-C-methyl-D-erythritol + ATP = 4-CDP-2-C-methyl-D-erythritol 2-phosphate + ADP + H(+). Its pathway is isoprenoid biosynthesis; isopentenyl diphosphate biosynthesis via DXP pathway; isopentenyl diphosphate from 1-deoxy-D-xylulose 5-phosphate: step 3/6. In terms of biological role, catalyzes the phosphorylation of the position 2 hydroxy group of 4-diphosphocytidyl-2C-methyl-D-erythritol. This Mannheimia succiniciproducens (strain KCTC 0769BP / MBEL55E) protein is 4-diphosphocytidyl-2-C-methyl-D-erythritol kinase.